Here is a 240-residue protein sequence, read N- to C-terminus: 3-dehydroquinate dehydratase (240 aa).

3-dehydroquinate is bound by residues S15, 42–44 (EWR), and R73. The active-site Proton donor/acceptor is the H132. The active-site Schiff-base intermediate with substrate is K160. Positions 202, 221, and 225 each coordinate 3-dehydroquinate.

It belongs to the type-I 3-dehydroquinase family. In terms of assembly, homodimer.

The enzyme catalyses 3-dehydroquinate = 3-dehydroshikimate + H2O. It functions in the pathway metabolic intermediate biosynthesis; chorismate biosynthesis; chorismate from D-erythrose 4-phosphate and phosphoenolpyruvate: step 3/7. Involved in the third step of the chorismate pathway, which leads to the biosynthesis of aromatic amino acids. Catalyzes the cis-dehydration of 3-dehydroquinate (DHQ) and introduces the first double bond of the aromatic ring to yield 3-dehydroshikimate. This chain is 3-dehydroquinate dehydratase, found in Latilactobacillus sakei subsp. sakei (strain 23K) (Lactobacillus sakei subsp. sakei).